The primary structure comprises 89 residues: UPF0237 protein CE1668 (89 aa).

In terms of domain architecture, ACT spans 4–78 (IMTVTGQDHT…KEQGLVIRIQ (75 aa)).

Belongs to the UPF0237 family.

This is UPF0237 protein CE1668 from Corynebacterium efficiens (strain DSM 44549 / YS-314 / AJ 12310 / JCM 11189 / NBRC 100395).